Reading from the N-terminus, the 318-residue chain is Probable cell division protein WhiA (318 aa).

Residues 281–314 (SLKELGEMLSPPVGKSGVNHRLRRIEKIAEELSK) constitute a DNA-binding region (H-T-H motif).

Belongs to the WhiA family.

Its function is as follows. Involved in cell division and chromosome segregation. In Clostridium tetani (strain Massachusetts / E88), this protein is Probable cell division protein WhiA.